Consider the following 81-residue polypeptide: Sulfur carrier protein TusA (81 aa).

The active-site Cysteine persulfide intermediate is the cysteine 19.

The protein belongs to the sulfur carrier protein TusA family. In terms of assembly, interacts with IscS.

The protein localises to the cytoplasm. It functions in the pathway tRNA modification. Its function is as follows. Sulfur carrier protein involved in sulfur trafficking in the cell. Part of a sulfur-relay system required for 2-thiolation during synthesis of 2-thiouridine of the modified wobble base 5-methylaminomethyl-2-thiouridine (mnm(5)s(2)U) in tRNA. Interacts with IscS and stimulates its cysteine desulfurase activity. Accepts an activated sulfur from IscS, which is then transferred to TusD, and thus determines the direction of sulfur flow from IscS to 2-thiouridine formation. Also appears to be involved in sulfur transfer for the biosynthesis of molybdopterin. This chain is Sulfur carrier protein TusA, found in Klebsiella pneumoniae subsp. pneumoniae (strain ATCC 700721 / MGH 78578).